We begin with the raw amino-acid sequence, 150 residues long: Large ribosomal subunit protein bL9 (150 aa).

It belongs to the bacterial ribosomal protein bL9 family.

Its function is as follows. Binds to the 23S rRNA. The protein is Large ribosomal subunit protein bL9 of Shewanella halifaxensis (strain HAW-EB4).